Consider the following 172-residue polypeptide: Myosin regulatory light polypeptide 9 (172 aa).

Residues 1–16 show a composition bias toward basic residues; sequence MSSKRAKAKTTKKRPQ. The segment at 1–20 is disordered; it reads MSSKRAKAKTTKKRPQRATS. Serine 2 carries the N-acetylserine modification. A Phosphothreonine; by MLCK, CIT and ROCK2 modification is found at threonine 19. Serine 20 carries the post-translational modification Phosphoserine; by CDC42BP, CIT, MLCK, PAK1, ROCK1, ROCK2, DAPK1, DAPK2 and ZIPK/DAPK3. EF-hand domains follow at residues 29-64, 98-133, and 134-169; these read SQIQ…LGKN, DPED…MGDR, and FTDE…GAKD. Residues aspartate 42, asparagine 44, aspartate 46, and aspartate 53 each contribute to the Ca(2+) site.

Myosin is a hexamer of 2 heavy chains and 4 light chains: interacts with myosin heavy chain MYO19. Interacts with LUZP1; the interaction results in inhibition of phosphorylation of MYL9 by DAPK3. In terms of processing, phosphorylation increases the actin-activated myosin ATPase activity and thereby regulates the contractile activity. It is required to generate the driving force in the migration of the cells but not necessary for localization of myosin-2 at the leading edge. Phosphorylation is required for myotube formation. Phosphorylated by DAPK3; DAPK3-mediated phosphorylation is inhibited by LUZP1. In terms of tissue distribution, smooth muscle tissues and in some, but not all, nonmuscle cells.

It localises to the cytoplasm. The protein resides in the cytoskeleton. The protein localises to the cell cortex. Functionally, myosin regulatory subunit that plays an important role in regulation of both smooth muscle and nonmuscle cell contractile activity via its phosphorylation. Implicated in cytokinesis, receptor capping, and cell locomotion. In myoblasts, may regulate PIEZO1-dependent cortical actomyosin assembly involved in myotube formation. The polypeptide is Myosin regulatory light polypeptide 9 (MYL9) (Homo sapiens (Human)).